Here is a 211-residue protein sequence, read N- to C-terminus: Imidazole glycerol phosphate synthase subunit HisH (211 aa).

Residues 3–211 (VIAVVDYEMG…VAQVREKIPA (209 aa)) form the Glutamine amidotransferase type-1 domain. Cysteine 81 (nucleophile) is an active-site residue. Residues histidine 186 and glutamate 188 contribute to the active site.

Heterodimer of HisH and HisF.

It localises to the cytoplasm. It carries out the reaction 5-[(5-phospho-1-deoxy-D-ribulos-1-ylimino)methylamino]-1-(5-phospho-beta-D-ribosyl)imidazole-4-carboxamide + L-glutamine = D-erythro-1-(imidazol-4-yl)glycerol 3-phosphate + 5-amino-1-(5-phospho-beta-D-ribosyl)imidazole-4-carboxamide + L-glutamate + H(+). The enzyme catalyses L-glutamine + H2O = L-glutamate + NH4(+). It functions in the pathway amino-acid biosynthesis; L-histidine biosynthesis; L-histidine from 5-phospho-alpha-D-ribose 1-diphosphate: step 5/9. In terms of biological role, IGPS catalyzes the conversion of PRFAR and glutamine to IGP, AICAR and glutamate. The HisH subunit catalyzes the hydrolysis of glutamine to glutamate and ammonia as part of the synthesis of IGP and AICAR. The resulting ammonia molecule is channeled to the active site of HisF. In Nostoc punctiforme (strain ATCC 29133 / PCC 73102), this protein is Imidazole glycerol phosphate synthase subunit HisH.